Consider the following 513-residue polypeptide: Na(+)/H(+) antiporter NhaB (513 aa).

Helical transmembrane passes span 23–43, 52–72, 97–117, 120–140, 144–164, 202–222, 238–258, 303–323, 348–368, 391–411, 447–467, and 475–495; these read LALI…PFVA, IFTL…LLAI, LLLM…LFIF, LLLS…AAAF, FLDA…FYGI, LMMH…VGEP, FFLR…LTCL, AIIG…VGLI, TESL…AVII, LFYI…VGTI, ATPN…APLI, and VWMA…CVEF.

Belongs to the NhaB Na(+)/H(+) (TC 2.A.34) antiporter family.

The protein localises to the cell inner membrane. The catalysed reaction is 2 Na(+)(in) + 3 H(+)(out) = 2 Na(+)(out) + 3 H(+)(in). Na(+)/H(+) antiporter that extrudes sodium in exchange for external protons. This is Na(+)/H(+) antiporter NhaB from Escherichia coli O6:H1 (strain CFT073 / ATCC 700928 / UPEC).